The primary structure comprises 185 residues: GTP cyclohydrolase 1 (185 aa).

Residues Cys-75, His-78, and Cys-146 each contribute to the Zn(2+) site.

The protein belongs to the GTP cyclohydrolase I family. As to quaternary structure, homomer.

The catalysed reaction is GTP + H2O = 7,8-dihydroneopterin 3'-triphosphate + formate + H(+). Its pathway is cofactor biosynthesis; 7,8-dihydroneopterin triphosphate biosynthesis; 7,8-dihydroneopterin triphosphate from GTP: step 1/1. This is GTP cyclohydrolase 1 from Clostridium kluyveri (strain NBRC 12016).